We begin with the raw amino-acid sequence, 37 residues long: U4-theraphotoxin-Hhn1v (37 aa).

Cystine bridges form between Cys3-Cys17, Cys7-Cys28, and Cys22-Cys33.

This sequence belongs to the neurotoxin 12 (Hwtx-2) family. 02 (Hwtx-2) subfamily. Expressed by the venom gland.

The protein localises to the secreted. Postsynaptic neurotoxin. The sequence is that of U4-theraphotoxin-Hhn1v from Cyriopagopus hainanus (Chinese bird spider).